The following is a 632-amino-acid chain: Phosphomethylpyrimidine synthase (632 aa).

Residues asparagine 237, methionine 266, tyrosine 295, histidine 331, 351–353 (SRG), 392–395 (DGLR), and glutamate 431 each bind substrate. A Zn(2+)-binding site is contributed by histidine 435. Residue tyrosine 458 coordinates substrate. Residue histidine 499 coordinates Zn(2+). 3 residues coordinate [4Fe-4S] cluster: cysteine 579, cysteine 582, and cysteine 587.

The protein belongs to the ThiC family. Homodimer. [4Fe-4S] cluster is required as a cofactor.

The enzyme catalyses 5-amino-1-(5-phospho-beta-D-ribosyl)imidazole + S-adenosyl-L-methionine = 4-amino-2-methyl-5-(phosphooxymethyl)pyrimidine + CO + 5'-deoxyadenosine + formate + L-methionine + 3 H(+). The protein operates within cofactor biosynthesis; thiamine diphosphate biosynthesis. Catalyzes the synthesis of the hydroxymethylpyrimidine phosphate (HMP-P) moiety of thiamine from aminoimidazole ribotide (AIR) in a radical S-adenosyl-L-methionine (SAM)-dependent reaction. This is Phosphomethylpyrimidine synthase from Nitrosomonas eutropha (strain DSM 101675 / C91 / Nm57).